Here is a 409-residue protein sequence, read N- to C-terminus: LysM domain-containing GPI-anchored protein LYP6 (409 aa).

Residues 1–27 (MAGWPAAEAAGALVVAILAAAAGGAAG) form the signal peptide. Intrachain disulfides connect C34-C100, C40-C166, C98-C164, and C100-C166. The 51-residue stretch at 110–160 (VRYSARPADTLASVADVVFAGLASADQIRTANGLSAEDPDAPLDAGATLVV) folds into the LysM 1 domain. The N-linked (GlcNAc...) asparagine glycan is linked to N168. Positions 179–222 (LSYVVRVGDTVQSIAATHATTVTDISNVNAMGSPIVAPGDILAI) constitute a LysM 2 domain. 2 cysteine pairs are disulfide-bonded: C227–C259 and C254–C282. A glycan (N-linked (GlcNAc...) asparagine) is linked at N244. N-linked (GlcNAc...) asparagine glycans are attached at residues N291, N302, and N313. Residues 353–387 (SPAPGAGEAGGDIPGFPGSSNVSPANGPSGSVSQA) form a disordered region. The segment covering 370 to 387 (GSSNVSPANGPSGSVSQA) has biased composition (polar residues). A387 is lipidated: GPI-anchor amidated alanine. A propeptide spans 388-409 (ASVNRPHQIVALILSVALYFQM) (removed in mature form).

In terms of assembly, interacts with LYP4. Interacts with CERK1. Interacts with CEBIP. As to expression, expressed in roots and leaves.

Its subcellular location is the cell membrane. Functions in innate immunity. Functions as a pattern recognition receptor (PRR), sensing bacterial peptidoglycan (PGN) and fungal chitin at the cell surface. Involved in resistance against the bacterial pathogen Xanthomonas oryzae pv. oryzae (Xoo) and the fungal pathogen Magnaporthe oryzae. Binds PGN and fungal chitin in vitro. Involved in microbe-associated molecular patterns (MAMPs) perception and participates in the activation of defense genes against the bacterial pathogen Xanthomonas oryzae pv. oryzicola (Xoc) or the fungal pathogen Magnaporthe oryzae. In Oryza sativa subsp. japonica (Rice), this protein is LysM domain-containing GPI-anchored protein LYP6.